A 341-amino-acid polypeptide reads, in one-letter code: DnaJ homolog subfamily C member 22 (341 aa).

The TM2 domain maps to 4 to 50 (GLLMTYALWAFGGPVGLHHLYLGRDSHALLWMLTLGGGGLGWLWEFW). The next 7 helical transmembrane spans lie at 5–25 (LLMTYALWAFGGPVGLHHLYL), 30–50 (HALLWMLTLGGGGLGWLWEFW), 81–101 (FASQMVVGVYFGLVALISLSS), 105–125 (FYIVGLPLAVGLGVLLVAAVG), 135–155 (LGAAFLTSPVFYGRPIAILPI), 185–205 (VGLAYLAFTGPLAYSTLYNTA), and 232–252 (VESVLLLPCRIWWLLVGAPGF). In terms of domain architecture, J spans 277–341 (LAHQVLGIPE…QPKKPRASWR (65 aa)).

The protein resides in the membrane. May function as a co-chaperone. The sequence is that of DnaJ homolog subfamily C member 22 (Dnajc22) from Rattus norvegicus (Rat).